A 567-amino-acid polypeptide reads, in one-letter code: Oxygen-dependent choline dehydrogenase (567 aa).

FAD is bound at residue 4 to 33; sequence DYIIIGAGSAGNVLAARLTEDADVTVLLLE. Residue His473 is the Proton acceptor of the active site.

This sequence belongs to the GMC oxidoreductase family. FAD is required as a cofactor.

It carries out the reaction choline + A = betaine aldehyde + AH2. It catalyses the reaction betaine aldehyde + NAD(+) + H2O = glycine betaine + NADH + 2 H(+). Its pathway is amine and polyamine biosynthesis; betaine biosynthesis via choline pathway; betaine aldehyde from choline (cytochrome c reductase route): step 1/1. Its function is as follows. Involved in the biosynthesis of the osmoprotectant glycine betaine. Catalyzes the oxidation of choline to betaine aldehyde and betaine aldehyde to glycine betaine at the same rate. The polypeptide is Oxygen-dependent choline dehydrogenase (Yersinia pestis bv. Antiqua (strain Antiqua)).